The sequence spans 204 residues: Small ribosomal subunit protein uS4 (204 aa).

Positions R92–I153 constitute an S4 RNA-binding domain.

It belongs to the universal ribosomal protein uS4 family. As to quaternary structure, part of the 30S ribosomal subunit. Contacts protein S5. The interaction surface between S4 and S5 is involved in control of translational fidelity.

One of the primary rRNA binding proteins, it binds directly to 16S rRNA where it nucleates assembly of the body of the 30S subunit. Functionally, with S5 and S12 plays an important role in translational accuracy. In Streptomyces coelicolor (strain ATCC BAA-471 / A3(2) / M145), this protein is Small ribosomal subunit protein uS4.